A 288-amino-acid chain; its full sequence is 4-diphosphocytidyl-2-C-methyl-D-erythritol kinase (288 aa).

Residue lysine 8 is part of the active site. 90 to 100 (PVGAGLAGGSS) is an ATP binding site. The active site involves aspartate 132.

This sequence belongs to the GHMP kinase family. IspE subfamily.

It carries out the reaction 4-CDP-2-C-methyl-D-erythritol + ATP = 4-CDP-2-C-methyl-D-erythritol 2-phosphate + ADP + H(+). The protein operates within isoprenoid biosynthesis; isopentenyl diphosphate biosynthesis via DXP pathway; isopentenyl diphosphate from 1-deoxy-D-xylulose 5-phosphate: step 3/6. Its function is as follows. Catalyzes the phosphorylation of the position 2 hydroxy group of 4-diphosphocytidyl-2C-methyl-D-erythritol. This Chlamydia trachomatis serovar L2b (strain UCH-1/proctitis) protein is 4-diphosphocytidyl-2-C-methyl-D-erythritol kinase.